We begin with the raw amino-acid sequence, 1253 residues long: Cytoplasmic FMR1-interacting protein 1 (1253 aa).

The residue at position 583 (Ser583) is a Phosphoserine. Thr1234 is subject to Phosphothreonine.

Belongs to the CYFIP family. In terms of assembly, component of the WAVE1 complex composed of ABI2, CYFIP1 or CYFIP2, BRK1, NCKAP1 and WASF1/WAVE1. Within the complex, a heterodimer containing NCKAP1 and CYFIP1 interacts with a heterotrimer formed by WAVE1, ABI2 and BRK1. Component of the CYFIP1-EIF4E-FMR1 complex which is composed of CYFIP, EIF4E and FMR1. Interacts with FMR1 but does not bind to related proteins FXR1 or FXR2. Interaction with EIF4E stimulates FMR1 binding. Component of the WAVE2 complex composed of ABI1, CYFIP1/SRA1, NCKAP1/NAP1 (NCKAP1l/HEM1 in hematopoietic cells) and WASF2/WAVE2. Interacts with the active GTP-bound form of RAC1. Interacts through its C-terminus with the C-terminus of DPYSL2/CRMP2 which is necessary for DPYSL2-induced axon outgrowth. Interacts with NYAP1, NYAP2 and MYO16. Interacts with TMEM108 (via N-terminus); the interaction associates TMEM108 with the WAVE1 complex.

It is found in the cytoplasm. The protein localises to the perinuclear region. Its subcellular location is the cell projection. The protein resides in the lamellipodium. It localises to the ruffle. It is found in the synapse. The protein localises to the synaptosome. In terms of biological role, component of the CYFIP1-EIF4E-FMR1 complex which binds to the mRNA cap and mediates translational repression. In the CYFIP1-EIF4E-FMR1 complex this subunit is an adapter between EIF4E and FMR1. Promotes the translation repression activity of FMR1 in brain probably by mediating its association with EIF4E and mRNA. Regulates formation of membrane ruffles and lamellipodia. Plays a role in axon outgrowth. Binds to F-actin but not to RNA. Part of the WAVE complex that regulates actin filament reorganization via its interaction with the Arp2/3 complex. Actin remodeling activity is regulated by RAC1. Regulator of epithelial morphogenesis. As component of the WAVE1 complex, required for BDNF-NTRK2 endocytic trafficking and signaling from early endosomes. May act as an invasion suppressor in cancers. The polypeptide is Cytoplasmic FMR1-interacting protein 1 (Homo sapiens (Human)).